We begin with the raw amino-acid sequence, 435 residues long: Serine hydroxymethyltransferase (435 aa).

(6S)-5,6,7,8-tetrahydrofolate is bound by residues L133 and 137–139; that span reads GHL. K242 carries the N6-(pyridoxal phosphate)lysine modification.

Belongs to the SHMT family. As to quaternary structure, homodimer. It depends on pyridoxal 5'-phosphate as a cofactor.

Its subcellular location is the cytoplasm. It catalyses the reaction (6R)-5,10-methylene-5,6,7,8-tetrahydrofolate + glycine + H2O = (6S)-5,6,7,8-tetrahydrofolate + L-serine. It functions in the pathway one-carbon metabolism; tetrahydrofolate interconversion. Its pathway is amino-acid biosynthesis; glycine biosynthesis; glycine from L-serine: step 1/1. Its function is as follows. Catalyzes the reversible interconversion of serine and glycine with tetrahydrofolate (THF) serving as the one-carbon carrier. This reaction serves as the major source of one-carbon groups required for the biosynthesis of purines, thymidylate, methionine, and other important biomolecules. Also exhibits THF-independent aldolase activity toward beta-hydroxyamino acids, producing glycine and aldehydes, via a retro-aldol mechanism. This is Serine hydroxymethyltransferase from Sphingopyxis alaskensis (strain DSM 13593 / LMG 18877 / RB2256) (Sphingomonas alaskensis).